The following is a 426-amino-acid chain: Gamma-glutamyl phosphate reductase (426 aa).

This sequence belongs to the gamma-glutamyl phosphate reductase family.

The protein localises to the cytoplasm. It carries out the reaction L-glutamate 5-semialdehyde + phosphate + NADP(+) = L-glutamyl 5-phosphate + NADPH + H(+). The protein operates within amino-acid biosynthesis; L-proline biosynthesis; L-glutamate 5-semialdehyde from L-glutamate: step 2/2. Catalyzes the NADPH-dependent reduction of L-glutamate 5-phosphate into L-glutamate 5-semialdehyde and phosphate. The product spontaneously undergoes cyclization to form 1-pyrroline-5-carboxylate. In Delftia acidovorans (strain DSM 14801 / SPH-1), this protein is Gamma-glutamyl phosphate reductase.